A 240-amino-acid chain; its full sequence is Purine nucleoside phosphorylase DeoD-type (240 aa).

His-5 contributes to the a purine D-ribonucleoside binding site. Phosphate is bound by residues Gly-21, Arg-25, Arg-44, and 88 to 91; that span reads RVGS. Residues 180–182 and 204–205 each bind a purine D-ribonucleoside; these read EME and SD. Asp-205 serves as the catalytic Proton donor.

It belongs to the PNP/UDP phosphorylase family. As to quaternary structure, homohexamer; trimer of homodimers.

The enzyme catalyses a purine D-ribonucleoside + phosphate = a purine nucleobase + alpha-D-ribose 1-phosphate. It carries out the reaction a purine 2'-deoxy-D-ribonucleoside + phosphate = a purine nucleobase + 2-deoxy-alpha-D-ribose 1-phosphate. In terms of biological role, catalyzes the reversible phosphorolytic breakdown of the N-glycosidic bond in the beta-(deoxy)ribonucleoside molecules, with the formation of the corresponding free purine bases and pentose-1-phosphate. In Actinobacillus pleuropneumoniae serotype 5b (strain L20), this protein is Purine nucleoside phosphorylase DeoD-type.